A 227-amino-acid chain; its full sequence is Cytochrome c oxidase subunit 2 (227 aa).

Over 1-14 (MAYPLQMGLQDATS) the chain is Mitochondrial intermembrane. The helical transmembrane segment at 15-45 (PIMEELLHFHDHTLMIVFLISSLVLYIISLM) threads the bilayer. The Mitochondrial matrix portion of the chain corresponds to 46 to 59 (LTTKLTHTSTMDAQ). A helical membrane pass occupies residues 60-87 (EVETVWTILPAIILILIALPSLRILYMM). Residues 88 to 227 (DEINNPSLTV…HFEKWSTSML (140 aa)) are Mitochondrial intermembrane-facing. Residues H161, C196, E198, C200, H204, and M207 each coordinate Cu cation. Position 198 (E198) interacts with Mg(2+).

The protein belongs to the cytochrome c oxidase subunit 2 family. Component of the cytochrome c oxidase (complex IV, CIV), a multisubunit enzyme composed of 14 subunits. The complex is composed of a catalytic core of 3 subunits MT-CO1, MT-CO2 and MT-CO3, encoded in the mitochondrial DNA, and 11 supernumerary subunits COX4I, COX5A, COX5B, COX6A, COX6B, COX6C, COX7A, COX7B, COX7C, COX8 and NDUFA4, which are encoded in the nuclear genome. The complex exists as a monomer or a dimer and forms supercomplexes (SCs) in the inner mitochondrial membrane with NADH-ubiquinone oxidoreductase (complex I, CI) and ubiquinol-cytochrome c oxidoreductase (cytochrome b-c1 complex, complex III, CIII), resulting in different assemblies (supercomplex SCI(1)III(2)IV(1) and megacomplex MCI(2)III(2)IV(2)). Found in a complex with TMEM177, COA6, COX18, COX20, SCO1 and SCO2. Interacts with TMEM177 in a COX20-dependent manner. Interacts with COX20. Interacts with COX16. Cu cation serves as cofactor.

The protein resides in the mitochondrion inner membrane. It carries out the reaction 4 Fe(II)-[cytochrome c] + O2 + 8 H(+)(in) = 4 Fe(III)-[cytochrome c] + 2 H2O + 4 H(+)(out). Its function is as follows. Component of the cytochrome c oxidase, the last enzyme in the mitochondrial electron transport chain which drives oxidative phosphorylation. The respiratory chain contains 3 multisubunit complexes succinate dehydrogenase (complex II, CII), ubiquinol-cytochrome c oxidoreductase (cytochrome b-c1 complex, complex III, CIII) and cytochrome c oxidase (complex IV, CIV), that cooperate to transfer electrons derived from NADH and succinate to molecular oxygen, creating an electrochemical gradient over the inner membrane that drives transmembrane transport and the ATP synthase. Cytochrome c oxidase is the component of the respiratory chain that catalyzes the reduction of oxygen to water. Electrons originating from reduced cytochrome c in the intermembrane space (IMS) are transferred via the dinuclear copper A center (CU(A)) of subunit 2 and heme A of subunit 1 to the active site in subunit 1, a binuclear center (BNC) formed by heme A3 and copper B (CU(B)). The BNC reduces molecular oxygen to 2 water molecules using 4 electrons from cytochrome c in the IMS and 4 protons from the mitochondrial matrix. The sequence is that of Cytochrome c oxidase subunit 2 (MT-CO2) from Halichoerus grypus (Gray seal).